The chain runs to 503 residues: GMP synthase [glutamine-hydrolyzing] (503 aa).

The Glutamine amidotransferase type-1 domain maps to 3–189 (PVLVVDFGSQ…AFLSSFAAPN (187 aa)). Catalysis depends on Cys-80, which acts as the Nucleophile. Residues His-165 and Glu-167 contribute to the active site. The 191-residue stretch at 190 to 380 (WDPEQTICGT…LGIPKHIVHR (191 aa)) folds into the GMPS ATP-PPase domain. 217–223 (SGGVDSV) lines the ATP pocket.

In terms of assembly, homodimer.

It carries out the reaction XMP + L-glutamine + ATP + H2O = GMP + L-glutamate + AMP + diphosphate + 2 H(+). It functions in the pathway purine metabolism; GMP biosynthesis; GMP from XMP (L-Gln route): step 1/1. In terms of biological role, catalyzes the synthesis of GMP from XMP. The protein is GMP synthase [glutamine-hydrolyzing] of Tropheryma whipplei (strain Twist) (Whipple's bacillus).